Consider the following 370-residue polypeptide: Lysophosphatidic acid receptor 4 (370 aa).

Topologically, residues 1-43 are extracellular; sequence MGDRRFIDFQFQDSNSSLRPRLGNATANNTCIVDDSFKYNLNG. 3 N-linked (GlcNAc...) asparagine glycosylation sites follow: asparagine 15, asparagine 24, and asparagine 28. The chain crosses the membrane as a helical span at residues 44-64; that stretch reads AVYSVVFILGLITNSVSLFVF. The Cytoplasmic segment spans residues 65–73; the sequence is CFRMKMRSE. A helical membrane pass occupies residues 74 to 94; it reads TAIFITNLAVSDLLFVCTLPF. The Extracellular portion of the chain corresponds to 95–112; that stretch reads KIFYNFNRHWPFGDTLCK. Residues cysteine 111 and cysteine 188 are joined by a disulfide bond. A helical transmembrane segment spans residues 113–133; it reads ISGTAFLTNIYGSMLFLTCIS. Residues 134 to 155 lie on the Cytoplasmic side of the membrane; the sequence is VDRFLAIVYPFRSRTIRTRRNS. Residues 156–176 form a helical membrane-spanning segment; it reads AIVCAGVWILVLSGGISASLF. The Extracellular portion of the chain corresponds to 177 to 203; that stretch reads STTNVNNATTTCFEGFSKRVWKTYLSK. Residue asparagine 183 is glycosylated (N-linked (GlcNAc...) asparagine). Residues 204-224 form a helical membrane-spanning segment; the sequence is ITIFIEVVGFIIPLILNVSCS. The Cytoplasmic portion of the chain corresponds to 225 to 254; the sequence is SVVLRTLRKPATLSQIGTNKKKVLKMITVH. Residues 255–275 traverse the membrane as a helical segment; that stretch reads MAVFVVCFVPYNSVLFLYALV. Residues 276 to 294 lie on the Extracellular side of the membrane; that stretch reads RSQAITNCFLERFAKIMYP. Residues 295-315 form a helical membrane-spanning segment; it reads ITLCLATLNCCFDPFIYYFTL. At 316–370 the chain is on the cytoplasmic side; that stretch reads ESFQKSFYINAHIRMESLFKTETPLTTKPSLPAIQEEVSDQTTNNGGELMLESTF.

It belongs to the G-protein coupled receptor 1 family. As to expression, high expression in ovary. Not detected in the brain regions thalamus, putamen, caudate, frontal cortex, pons, hypothalamus and hippocampus.

The protein resides in the cell membrane. Its function is as follows. Receptor for lysophosphatidic acid (LPA), a mediator of diverse cellular activities. Transduces a signal by increasing the intracellular calcium ions and by stimulating adenylyl cyclase activity. The rank order of potency for agonists of this receptor is 1-oleoyl- &gt; 1-stearoyl- &gt; 1-palmitoyl- &gt; 1-myristoyl- &gt; 1-alkyl- &gt; 1-alkenyl-LPA. This Homo sapiens (Human) protein is Lysophosphatidic acid receptor 4 (LPAR4).